The following is a 155-amino-acid chain: MSEAKNGPEYASFFAVMGASAAMVFSALGAAYGTAKSGTGIAAMSVMRPEMIMKSIIPVVMAGIIAIYGLVVAVLIANSLNDGISLYRSFLQLGAGLSVGLSGLAAGFAIGIVGDAGVRGTAQQPRLFVGMILILIFAEVLGLYGLIVALILSTK.

The Lumenal portion of the chain corresponds to 1–10 (MSEAKNGPEY). The chain crosses the membrane as a helical span at residues 11–33 (ASFFAVMGASAAMVFSALGAAYG). The Cytoplasmic portion of the chain corresponds to 34-55 (TAKSGTGIAAMSVMRPEMIMKS). Residues 56–76 (IIPVVMAGIIAIYGLVVAVLI) form a helical membrane-spanning segment. The Lumenal segment spans residues 77 to 92 (ANSLNDGISLYRSFLQ). Residues 93-114 (LGAGLSVGLSGLAAGFAIGIVG) traverse the membrane as a helical segment. Residues 115–131 (DAGVRGTAQQPRLFVGM) lie on the Cytoplasmic side of the membrane. The helical transmembrane segment at 132–152 (ILILIFAEVLGLYGLIVALIL) threads the bilayer. At 153-155 (STK) the chain is on the lumenal side.

This sequence belongs to the V-ATPase proteolipid subunit family. V-ATPase is a heteromultimeric enzyme made up of two complexes: the ATP-hydrolytic V1 complex and the proton translocation V0 complex. The V1 complex consists of three catalytic AB heterodimers that form a heterohexamer, three peripheral stalks each consisting of EG heterodimers, one central rotor including subunits D and F, and the regulatory subunits C and H. The proton translocation complex V0 consists of the proton transport subunit a, a ring of proteolipid subunits c9c'', rotary subunit d, subunits e and f, and the accessory subunits ATP6AP1/Ac45 and ATP6AP2/PRR. Interacts with the V0 complex V-ATPase subunit a4 ATP6V0A4. Interacts with LASS2. Interacts with RNF182; this interaction leads to ubiquitination and degradation via the proteasome pathway. Post-translationally, ubiquitinated by RNF182, leading to its degradation via the ubiquitin-proteasome pathway. Expressed in brain (at protein level).

The protein localises to the cytoplasmic vesicle. Its subcellular location is the clathrin-coated vesicle membrane. It localises to the secretory vesicle. The protein resides in the synaptic vesicle membrane. Its function is as follows. Proton-conducting pore forming subunit of the V0 complex of vacuolar(H+)-ATPase (V-ATPase), a multisubunit enzyme composed of a peripheral complex (V1) that hydrolyzes ATP and a membrane integral complex (V0) that translocates protons. V-ATPase is responsible for acidifying and maintaining the pH of intracellular compartments and in some cell types, is targeted to the plasma membrane, where it is responsible for acidifying the extracellular environment. The protein is V-type proton ATPase 16 kDa proteolipid subunit c (ATP6V0C) of Bos taurus (Bovine).